A 500-amino-acid chain; its full sequence is ATP synthase subunit beta (500 aa).

157 to 164 is an ATP binding site; the sequence is GGAGVGKT.

This sequence belongs to the ATPase alpha/beta chains family. In terms of assembly, F-type ATPases have 2 components, CF(1) - the catalytic core - and CF(0) - the membrane proton channel. CF(1) has five subunits: alpha(3), beta(3), gamma(1), delta(1), epsilon(1). CF(0) has three main subunits: a(1), b(2) and c(9-12). The alpha and beta chains form an alternating ring which encloses part of the gamma chain. CF(1) is attached to CF(0) by a central stalk formed by the gamma and epsilon chains, while a peripheral stalk is formed by the delta and b chains.

Its subcellular location is the cell inner membrane. The enzyme catalyses ATP + H2O + 4 H(+)(in) = ADP + phosphate + 5 H(+)(out). Its function is as follows. Produces ATP from ADP in the presence of a proton gradient across the membrane. The catalytic sites are hosted primarily by the beta subunits. The chain is ATP synthase subunit beta from Salinibacter ruber (strain DSM 13855 / M31).